The primary structure comprises 163 residues: Nucleotide-binding protein KPN78578_03700 (163 aa).

Belongs to the YajQ family.

Its function is as follows. Nucleotide-binding protein. This is Nucleotide-binding protein KPN78578_03700 from Klebsiella pneumoniae subsp. pneumoniae (strain ATCC 700721 / MGH 78578).